A 137-amino-acid polypeptide reads, in one-letter code: Basic phospholipase A2 beta-bungarotoxin A-AL4 chain (137 aa).

The signal sequence occupies residues 1–10; sequence LAVCVSLLGA. The propeptide occupies 11–18; that stretch reads ANIPPQHL. Intrachain disulfides connect C45/C137, C47/C63, C62/C118, C69/C111, C79/C104, and C97/C109. Ca(2+) is bound by residues Y46, G48, and G50. H66 is a catalytic residue. D67 lines the Ca(2+) pocket. Residue D112 is part of the active site.

This sequence belongs to the phospholipase A2 family. Group I subfamily. D49 sub-subfamily. As to quaternary structure, heterodimer; disulfide-linked. The A chains have phospholipase A2 activity and the B chains show homology with the basic protease inhibitors. Ca(2+) serves as cofactor. In terms of tissue distribution, expressed by the venom gland.

It is found in the secreted. It catalyses the reaction a 1,2-diacyl-sn-glycero-3-phosphocholine + H2O = a 1-acyl-sn-glycero-3-phosphocholine + a fatty acid + H(+). In terms of biological role, snake venom phospholipase A2 (PLA2) that inhibits neuromuscular transmission by blocking acetylcholine release from the nerve termini. PLA2 catalyzes the calcium-dependent hydrolysis of the 2-acyl groups in 3-sn-phosphoglycerides. The sequence is that of Basic phospholipase A2 beta-bungarotoxin A-AL4 chain from Bungarus multicinctus (Many-banded krait).